A 176-amino-acid polypeptide reads, in one-letter code: Ribosome rescue factor SmrB (176 aa).

One can recognise a Smr domain in the interval 93 to 168 (LDLHGYRQSE…GDAALLVLID (76 aa)).

This sequence belongs to the SmrB family. Associates with collided ribosomes, but not with correctly translating polysomes.

Functionally, acts as a ribosome collision sensor. Detects stalled/collided disomes (pairs of ribosomes where the leading ribosome is stalled and a second ribosome has collided with it) and endonucleolytically cleaves mRNA at the 5' boundary of the stalled ribosome. Stalled/collided disomes form a new interface (primarily via the 30S subunits) that binds SmrB. Cleaved mRNA becomes available for tmRNA ligation, leading to ribosomal subunit dissociation and rescue of stalled ribosomes. The chain is Ribosome rescue factor SmrB from Shewanella putrefaciens (strain CN-32 / ATCC BAA-453).